A 146-amino-acid chain; its full sequence is Hemoglobin subunit beta (146 aa).

Valine 1 is modified (N-acetylvaline). Residues 2-146 (HLSAEEKAAV…VANALAHKYH (145 aa)) form the Globin domain. A Phosphothreonine modification is found at threonine 12. Serine 44 carries the phosphoserine modification. Lysine 59 is subject to N6-acetyllysine. Histidine 63 contributes to the heme b binding site. Lysine 82 carries the N6-acetyllysine modification. Histidine 92 is a binding site for heme b. Cysteine 93 is modified (S-nitrosocysteine). Lysine 144 is subject to N6-acetyllysine.

It belongs to the globin family. As to quaternary structure, heterotetramer of two alpha chains and two beta chains. Red blood cells.

In terms of biological role, involved in oxygen transport from the lung to the various peripheral tissues. The protein is Hemoglobin subunit beta (HBB) of Ctenodactylus gundi (Northern gundi).